A 466-amino-acid polypeptide reads, in one-letter code: Cell division protein FtsP (466 aa).

Positions 1 to 28 (MGNYSRRRFLQGSLAIVAGNVLPCAAMA) form a signal peptide, tat-type signal.

This sequence belongs to the FtsP family. In terms of processing, predicted to be exported by the Tat system. The position of the signal peptide cleavage has not been experimentally proven.

It is found in the periplasm. Cell division protein that is required for growth during stress conditions. May be involved in protecting or stabilizing the divisomal assembly under conditions of stress. The sequence is that of Cell division protein FtsP from Gallibacterium anatis (strain UMN179) (Pasteurella anatis).